A 227-amino-acid polypeptide reads, in one-letter code: MKVSYHGHSVVKIEANGKVILIDPFLTGNPKTDLKTEDVKVDAILLSHGHGDHVGDTVELAKKNNAVVVAPFELATFLSWQGVNTHPMHIGGSHEFDFGKVKFTQAFHGSSYIDEENKTITYTGMPAGILFTAEEKTVYHAGDTALFSDMKLIGELNKVDLAFLPIGDNFTMGPEDAVLAAKWINAKTVVPMHYNTFPVIEQDPYQFVEKLQNCTGKVLEAGESITL.

The protein belongs to the UPF0173 family.

In Bacillus cereus (strain ATCC 14579 / DSM 31 / CCUG 7414 / JCM 2152 / NBRC 15305 / NCIMB 9373 / NCTC 2599 / NRRL B-3711), this protein is UPF0173 metal-dependent hydrolase BC_4613.